The following is a 465-amino-acid chain: Antithrombin-III (465 aa).

Residues 1-32 form the signal peptide; it reads MISNGIGTVTAGKRSICLLPLLLIGLWGCVTC. Cystine bridges form between Cys-41-Cys-161 and Cys-54-Cys-128. The residue at position 64 (Thr-64) is a Phosphothreonine. Ser-69 is modified (phosphoserine). Position 82 (Trp-82) interacts with heparin. Asn-129 carries an N-linked (GlcNAc...) asparagine glycan. Residue Arg-162 coordinates heparin. A glycan (N-linked (GlcNAc...) asparagine) is linked at Asn-168. Arg-178 serves as a coordination point for heparin. Residues Asn-188 and Asn-225 are each glycosylated (N-linked (GlcNAc...) asparagine). An intrachain disulfide couples Cys-280 to Cys-463.

The protein belongs to the serpin family. As to quaternary structure, forms protease inhibiting heterodimer with TMPRSS7. Phosphorylated by FAM20C in the extracellular medium. As to expression, plasma.

The protein localises to the secreted. It localises to the extracellular space. Its function is as follows. Most important serine protease inhibitor in plasma that regulates the blood coagulation cascade. AT-III inhibits thrombin, matriptase-3/TMPRSS7, as well as factors IXa, Xa and XIa. Its inhibitory activity is greatly enhanced in the presence of heparin. This chain is Antithrombin-III (SERPINC1), found in Bos taurus (Bovine).